A 141-amino-acid chain; its full sequence is Large ribosomal subunit protein uL11 (141 aa).

The protein belongs to the universal ribosomal protein uL11 family. In terms of assembly, part of the ribosomal stalk of the 50S ribosomal subunit. Interacts with L10 and the large rRNA to form the base of the stalk. L10 forms an elongated spine to which L12 dimers bind in a sequential fashion forming a multimeric L10(L12)X complex. One or more lysine residues are methylated.

Its function is as follows. Forms part of the ribosomal stalk which helps the ribosome interact with GTP-bound translation factors. In Nitratiruptor sp. (strain SB155-2), this protein is Large ribosomal subunit protein uL11.